A 450-amino-acid chain; its full sequence is Folate synthesis bifunctional protein (450 aa).

Residues 1 to 166 form an HPPK region; that stretch reads MTSWNFVCLS…TFAELAAIYP (166 aa). The Pterin-binding domain maps to 180–441; it reads TQIMGIVNIT…QVEGNRRALA (262 aa). The interval 182-450 is DHPS; it reads IMGIVNITDN…AAAAWAGMFV (269 aa). A Mg(2+)-binding site is contributed by Asn187. (7,8-dihydropterin-6-yl)methyl diphosphate-binding positions include Thr227, Asp267, Asn287, Asp358, Lys395, and 429–431; that span reads RVH.

It in the C-terminal section; belongs to the DHPS family. In the N-terminal section; belongs to the HPPK family. Mg(2+) serves as cofactor.

The catalysed reaction is 6-hydroxymethyl-7,8-dihydropterin + ATP = (7,8-dihydropterin-6-yl)methyl diphosphate + AMP + H(+). It carries out the reaction (7,8-dihydropterin-6-yl)methyl diphosphate + 4-aminobenzoate = 7,8-dihydropteroate + diphosphate. The protein operates within cofactor biosynthesis; tetrahydrofolate biosynthesis; 2-amino-4-hydroxy-6-hydroxymethyl-7,8-dihydropteridine diphosphate from 7,8-dihydroneopterin triphosphate: step 4/4. It functions in the pathway cofactor biosynthesis; tetrahydrofolate biosynthesis; 7,8-dihydrofolate from 2-amino-4-hydroxy-6-hydroxymethyl-7,8-dihydropteridine diphosphate and 4-aminobenzoate: step 1/2. In Chlamydia trachomatis serovar D (strain ATCC VR-885 / DSM 19411 / UW-3/Cx), this protein is Folate synthesis bifunctional protein (folKP).